A 369-amino-acid polypeptide reads, in one-letter code: Histidinol-phosphate aminotransferase 2 (369 aa).

At lysine 229 the chain carries N6-(pyridoxal phosphate)lysine.

Belongs to the class-II pyridoxal-phosphate-dependent aminotransferase family. Histidinol-phosphate aminotransferase subfamily. As to quaternary structure, homodimer. It depends on pyridoxal 5'-phosphate as a cofactor.

The enzyme catalyses L-histidinol phosphate + 2-oxoglutarate = 3-(imidazol-4-yl)-2-oxopropyl phosphate + L-glutamate. It participates in amino-acid biosynthesis; L-histidine biosynthesis; L-histidine from 5-phospho-alpha-D-ribose 1-diphosphate: step 7/9. The protein is Histidinol-phosphate aminotransferase 2 (hisC2) of Pseudomonas aeruginosa (strain ATCC 15692 / DSM 22644 / CIP 104116 / JCM 14847 / LMG 12228 / 1C / PRS 101 / PAO1).